Consider the following 2336-residue polypeptide: MVRFGDELGGRYGGTGGGERARGGGAGGAGGPGQGGLPPGQRVLYKQSIAQRARTMALYNPIPVKQNCFTVNRSLFVFSEDNVVRKYAKRITEWPPFEYMILATIIANCIVLALEQHLPDGDKTPMSERLDDTEPYFIGIFCFEAGIKIIALGFVFHKGSYLRNGWNVMDFVVVLTEILATAGTDFDLRTLRAVRVLRPLKLVSGIPSLQVVLKSIMKAMVPLLQIGLLLFFAILMFAIIGLEFYMGKFHKACFPNSTDAEPVGDFPCGKEAPARLCDSDTECREYWPGPNFGITNFDNILFAILTVFQCITMEGWTDILYNTNDAAGNTWNWLYFIPLIIIGSFFMLNLVLGVLSGEFAKERERVENRRAFLKLRRQQQIERELNGYLEWIFKAEEVMLAEEDKNAEEKSPLDAVLKRAATKKSRNDLIHAEEGEDRFVDLCAAGSPFARASLKSGKTESSSYFRRKEKMFRFLIRRMVKAQSFYWVVLCVVALNTLCVAMVHYNQPQRLTTALYFAEFVFLGLFLTEMSLKMYGLGPRSYFRSSFNCFDFGVIVGSIFEVVWAAIKPGTSFGISVLRALRLLRIFKVTKYWNSLRNLVVSLLNSMKSIISLLFLLFLFIVVFALLGMQLFGGQFNFQDETPTTNFDTFPAAILTVFQILTGEDWNAVMYHGIESQGGVSKGMFSSFYFIVLTLFGNYTLLNVFLAIAVDNLANAQELTKDEEEMEEAANQKLALQKAKEVAEVSPMSAANISIAARQQNSAKARSVWEQRASQLRLQNLRASCEALYSEMDPEERLRYASTRHVRPDMKTHMDRPLVVEPGRDGLRGPAGNKSKPEGTEATEGADPPRRHHRHRDRDKTSASTPAGGEQDRTDCPKAESTETGAREERARPRRSHSKEAPGADTQVRCERSRRHHRRGSPEEATEREPRRHRAHRHAQDSSKEGKEGTAPVLVPKGERRARHRGPRTGPRETENSEEPTRRHRAKHKVPPTLEPPEREVAEKESNVVEGDKETRNHQPKEPRCDLEAIAVTGVGSLHMLPSTCLQKVDEQPEDADNQRNVTRMGSQPSDPSTTVHVPVTLTGPPGEATVVPSANTDLEGQAEGKKEAEADDVLRRGPRPIVPYSSMFCLSPTNLLRRFCHYIVTMRYFEMVILVVIALSSIALAAEDPVRTDSFRNNALKYMDYIFTGVFTFEMVIKMIDLGLLLHPGAYFRDLWNILDFIVVSGALVAFAFSSFMGGSKGKDINTIKSLRVLRVLRPLKTIKRLPKLKAVFDCVVNSLKNVLNILIVYMLFMFIFAVIAVQLFKGKFFYCTDESKELERDCRGQYLDYEKEEVEAQPRQWKKYDFHYDNVLWALLTLFTVSTGEGWPMVLKHSVDATYEEQGPSPGFRMELSIFYVVYFVVFPFFFVNIFVALIIITFQEQGDKVMSECSLEKNERACIDFAISAKPLTRYMPQNKQSFQYKTWTFVVSPPFEYFIMAMIALNTVVLMMKFYDAPYEYELMLKCLNIVFTSMFSLECILKIIAFGVLNYFRDAWNVFDFVTVLGSITDILVTEIANNFINLSFLRLFRAARLIKLCRQGYTIRILLWTFVQSFKALPYVCLLIAMLFFIYAIIGMQVFGNIALDDGTSINRHNNFRTFLQALMLLFRSATGEAWHEIMLSCLGNRACDPHANASECGSDFAYFYFVSFIFLCSFLMLNLFVAVIMDNFEYLTRDSSILGPHHLDEFIRVWAEYDPAACGRISYNDMFEMLKHMSPPLGLGKKCPARVAYKRLVRMNMPISNEDMTVHFTSTLMALIRTALEIKLAPAGTKQHQCDAELRKEISSVWANLPQKTLDLLVPPHKPDEMTVGKVYAALMIFDFYKQNKTTRDQTHQAPGGLSQMGPVSLFHPLKATLEQTQPAVLRGARVFLRQKSATSLSNGGAIQTQESGIKESLSWGTQRTQDVLYEARAPLERGHSAEIPVGQPGALAVDVQMQNMTLRGPDGEPQPGLESQGRAASMPRLAAETQPAPNASPMKRSISTLAPRPHGTQLCNTVLDRPPPSQVSHHHHHRCHRRRDKKQRSLEKGPSLSVDTEGAPSTAAGSGLPHGEGSTGCRRERKQERGRSQERRQPSSSSSEKQRFYSCDRFGSREPPQPKPSLSSHPISPTAALEPGPHPQGSGSVNGSPLMSTSGASTPGRGGRRQLPQTPLTPRPSITYKTANSSPVHFAEGQSGLPAFSPGRLSRGLSEHNALLQKEPLSQPLASGSRIGSDPYLGQRLDSEASAHNLPEDTLTFEEAVATNSGRSSRTSYVSSLTSQSHPLRRVPNGYHCTLGLSTGVRARHSYHHPDQDHWC.

Residues 1-37 are disordered; it reads MVRFGDELGGRYGGTGGGERARGGGAGGAGGPGQGGL. The Cytoplasmic portion of the chain corresponds to 1–90; the sequence is MVRFGDELGG…DNVVRKYAKR (90 aa). A compositionally biased stretch (gly residues) spans 10-37; sequence GRYGGTGGGERARGGGAGGAGGPGQGGL. The residue at position 22 (Arg22) is an Omega-N-methylarginine. An I repeat occupies 82-359; that stretch reads NVVRKYAKRI…LVLGVLSGEF (278 aa). Residues 91–114 traverse the membrane as a helical segment; sequence ITEWPPFEYMILATIIANCIVLAL. Topologically, residues 115–131 are extracellular; the sequence is EQHLPDGDKTPMSERLD. Residues 132-152 traverse the membrane as a helical segment; it reads DTEPYFIGIFCFEAGIKIIAL. Residues 153-163 lie on the Cytoplasmic side of the membrane; the sequence is GFVFHKGSYLR. A helical transmembrane segment spans residues 164 to 182; that stretch reads NGWNVMDFVVVLTEILATA. Residues 183–187 are Extracellular-facing; that stretch reads GTDFD. Residues 188–211 traverse the membrane as a helical segment; it reads LRTLRAVRVLRPLKLVSGIPSLQV. The Cytoplasmic segment spans residues 212–221; the sequence is VLKSIMKAMV. The chain crosses the membrane as a helical span at residues 222–244; that stretch reads PLLQIGLLLFFAILMFAIIGLEF. Residues 245–331 lie on the Extracellular side of the membrane; sequence YMGKFHKACF…NTNDAAGNTW (87 aa). Asn256 carries N-linked (GlcNAc...) asparagine glycosylation. The helical transmembrane segment at 332 to 356 threads the bilayer; that stretch reads NWLYFIPLIIIGSFFMLNLVLGVLS. Residues 357–483 are Cytoplasmic-facing; it reads GEFAKERERV…FLIRRMVKAQ (127 aa). The binding to the beta subunit stretch occupies residues 379 to 396; sequence QQIERELNGYLEWIFKAE. Residue Ser411 is modified to Phosphoserine. Position 452 to 459 (452 to 459) interacts with ATP; it reads ASLKSGKT. One copy of the II repeat lies at 469 to 713; sequence EKMFRFLIRR…VFLAIAVDNL (245 aa). Residues 484 to 502 traverse the membrane as a helical segment; that stretch reads SFYWVVLCVVALNTLCVAM. The Extracellular portion of the chain corresponds to 503-512; sequence VHYNQPQRLT. The chain crosses the membrane as a helical span at residues 513–535; the sequence is TALYFAEFVFLGLFLTEMSLKMY. The Cytoplasmic portion of the chain corresponds to 536-545; it reads GLGPRSYFRS. Position 545 (Ser545) interacts with a 1,2-diacyl-sn-glycero-3-phospho-(1D-myo-inositol-4,5-bisphosphate). Residues 546-567 traverse the membrane as a helical segment; it reads SFNCFDFGVIVGSIFEVVWAAI. At 568-574 the chain is on the extracellular side; sequence KPGTSFG. Residues 575 to 587 form a helical membrane-spanning segment; the sequence is ISVLRALRLLRIF. A 1,2-diacyl-sn-glycero-3-phospho-(1D-myo-inositol-4,5-bisphosphate) contacts are provided by Arg585 and Lys588. Residues 588–605 are Cytoplasmic-facing; the sequence is KVTKYWNSLRNLVVSLLN. Residues 606–631 traverse the membrane as a helical segment; sequence SMKSIISLLFLLFLFIVVFALLGMQL. Topologically, residues 632-683 are extracellular; the sequence is FGGQFNFQDETPTTNFDTFPAAILTVFQILTGEDWNAVMYHGIESQGGVSKG. Residues 684–710 traverse the membrane as a helical segment; the sequence is MFSSFYFIVLTLFGNYTLLNVFLAIAV. At 711–1149 the chain is on the cytoplasmic side; sequence DNLANAQELT…FCHYIVTMRY (439 aa). A phosphoserine mark is found at Ser746, Ser749, and Ser784. 2 disordered regions span residues 800–1021 and 1051–1076; these read YAST…HQPK and EQPE…STTV. Composition is skewed to basic and acidic residues over residues 806–827, 870–891, 920–930, 938–948, 970–981, and 996–1021; these read VRPD…RDGL, EQDR…EERA, GSPEEATEREP, HAQDSSKEGKE, GPRETENSEEPT, and PPER…HQPK. The span at 1059–1076 shows a compositional bias: polar residues; it reads QRNVTRMGSQPSDPSTTV. Ser1067 bears the Phosphoserine mark. Residues 1135-1421 form an III repeat; that stretch reads NLLRRFCHYI…IFVALIIITF (287 aa). Residues 1150–1168 form a helical membrane-spanning segment; it reads FEMVILVVIALSSIALAAE. The Extracellular portion of the chain corresponds to 1169–1176; that stretch reads DPVRTDSF. The chain crosses the membrane as a helical span at residues 1177–1201; that stretch reads RNNALKYMDYIFTGVFTFEMVIKMI. The Cytoplasmic portion of the chain corresponds to 1202–1215; the sequence is DLGLLLHPGAYFRD. The helical transmembrane segment at 1216–1240 threads the bilayer; it reads LWNILDFIVVSGALVAFAFSSFMGG. The Extracellular segment spans residues 1241–1246; sequence SKGKDI. The chain crosses the membrane as a helical span at residues 1247–1267; the sequence is NTIKSLRVLRVLRPLKTIKRL. Residues 1268 to 1285 lie on the Cytoplasmic side of the membrane; the sequence is PKLKAVFDCVVNSLKNVL. A helical transmembrane segment spans residues 1286 to 1305; that stretch reads NILIVYMLFMFIFAVIAVQL. The Extracellular segment spans residues 1306–1392; it reads FKGKFFYCTD…EQGPSPGFRM (87 aa). Residues 1393-1418 form a helical membrane-spanning segment; the sequence is ELSIFYVVYFVVFPFFFVNIFVALII. Residues 1419 to 1473 are Cytoplasmic-facing; sequence ITFQEQGDKVMSECSLEKNERACIDFAISAKPLTRYMPQNKQSFQYKTWTFVVSP. Residues 1458–1711 form an IV repeat; it reads NKQSFQYKTW…LFVAVIMDNF (254 aa). Residues 1474 to 1492 form a helical membrane-spanning segment; the sequence is PFEYFIMAMIALNTVVLMM. At 1493 to 1500 the chain is on the extracellular side; the sequence is KFYDAPYE. A helical membrane pass occupies residues 1501-1525; that stretch reads YELMLKCLNIVFTSMFSLECILKII. Over 1526–1535 the chain is Cytoplasmic; the sequence is AFGVLNYFRD. A helical membrane pass occupies residues 1536-1557; the sequence is AWNVFDFVTVLGSITDILVTEI. Residues 1558–1563 are Extracellular-facing; the sequence is ANNFIN. Asn1563 is a glycosylation site (N-linked (GlcNAc...) asparagine). A helical transmembrane segment spans residues 1564-1582; the sequence is LSFLRLFRAARLIKLCRQG. The Cytoplasmic portion of the chain corresponds to 1583–1601; it reads YTIRILLWTFVQSFKALPY. A helical transmembrane segment spans residues 1602–1621; the sequence is VCLLIAMLFFIYAIIGMQVF. Residues 1622–1683 are Extracellular-facing; sequence GNIALDDGTS…ANASECGSDF (62 aa). An N-linked (GlcNAc...) asparagine glycan is attached at Asn1675. Residues 1684–1707 form a helical membrane-spanning segment; the sequence is AYFYFVSFIFLCSFLMLNLFVAVI. Topologically, residues 1708-2336 are cytoplasmic; the sequence is MDNFEYLTRD…YHHPDQDHWC (629 aa). One can recognise an EF-hand domain in the interval 1724–1759; it reads HHLDEFIRVWAEYDPAACGRISYNDMFEMLKHMSPP. Residues Asp1737, Arg1743, and Asp1748 each contribute to the Ca(2+) site. A disordered region spans residues 1981-2202; that stretch reads TLRGPDGEPQ…TPRPSITYKT (222 aa). Residues 2048–2062 show a composition bias toward basic residues; that stretch reads SHHHHHRCHRRRDKK. Ser2065 carries the phosphoserine modification. The segment covering 2097–2113 has biased composition (basic and acidic residues); sequence CRRERKQERGRSQERRQ. A compositionally biased stretch (polar residues) spans 2161 to 2177; it reads GSGSVNGSPLMSTSGAS. A phosphoserine mark is found at Ser2221, Ser2230, and Ser2253.

This sequence belongs to the calcium channel alpha-1 subunit (TC 1.A.1.11) family. CACNA1B subfamily. As to quaternary structure, multisubunit complex consisting of alpha-1, alpha-2, beta and delta subunits in a 1:1:1:1 ratio. The channel activity is directed by the pore-forming and voltage-sensitive alpha-1 subunit. In many cases, this subunit is sufficient to generate voltage-sensitive calcium channel activity. The auxiliary subunits beta and alpha-2/delta linked by a disulfide bridge regulate the channel activity. Interacts with RIMS1. Interacts with FMR1 (via C-terminus); this interaction induces a decrease in the number of presynaptic functional CACNA1B channels at the cell surface. Post-translationally, phosphorylated in vitro by CaM-kinase II, PKA, PKC and CGPK. Central nervous system.

The protein localises to the membrane. It catalyses the reaction Ca(2+)(in) = Ca(2+)(out). Is specifically blocked by omega-conotoxin GVIA. Is specifically blocked by omega-conotoxin MVIIA (ziconotide). Is insensitive to dihydropyridines (DHP). Its function is as follows. Voltage-sensitive calcium channels (VSCC) mediate the entry of calcium ions into excitable cells and are also involved in a variety of calcium-dependent processes, including muscle contraction, hormone or neurotransmitter release, gene expression, cell motility, cell division and cell death. This alpha-1B subunit gives rise to N-type calcium currents. N-type calcium channels belong to the 'high-voltage activated' (HVA) group. They are involved in pain signaling. Calcium channels containing alpha-1B subunit may play a role in directed migration of immature neurons. Mediates Ca(2+) release probability at hippocampal neuronal soma and synaptic terminals. This Rattus norvegicus (Rat) protein is Voltage-dependent N-type calcium channel subunit alpha-1B (Cacna1b).